A 173-amino-acid chain; its full sequence is Shikimate kinase 2 (173 aa).

An ATP-binding site is contributed by 12–17; that stretch reads GCGKTT. Mg(2+) contacts are provided by T16 and D32. Substrate contacts are provided by D34, R58, and G79. An LID domain region spans residues 112–126; the sequence is EENPQDNQRPTLTGR. ATP is bound at residue R120. R139 is a binding site for substrate. Q155 contacts ATP.

The protein belongs to the shikimate kinase family. AroL subfamily. In terms of assembly, monomer. The cofactor is Mg(2+).

Its subcellular location is the cytoplasm. It catalyses the reaction shikimate + ATP = 3-phosphoshikimate + ADP + H(+). Its pathway is metabolic intermediate biosynthesis; chorismate biosynthesis; chorismate from D-erythrose 4-phosphate and phosphoenolpyruvate: step 5/7. In terms of biological role, catalyzes the specific phosphorylation of the 3-hydroxyl group of shikimic acid using ATP as a cosubstrate. The chain is Shikimate kinase 2 from Pectobacterium carotovorum subsp. carotovorum (strain PC1).